The sequence spans 490 residues: GTPase Der (490 aa).

In terms of domain architecture, EngA-type G 1 spans 1–165 (MRIAILGRPN…RIRQVAEIPL (165 aa)). GTP is bound by residues 7–14 (GRPNVGKS), 54–58 (DTGGV), and 117–120 (NKAD). A disordered region spans residues 165 to 184 (LPSAEEQENTQEEEFSSKES). A compositionally biased stretch (acidic residues) spans 169–178 (EEQENTQEEE). Residues 227 to 400 (LKVALIGHPN…AVDDVYTIAT (174 aa)) enclose the EngA-type G 2 domain. GTP contacts are provided by residues 233–240 (GHPNVGKS), 280–284 (DTAGL), and 345–348 (NKWD). The 85-residue stretch at 401–485 (TKLSTSLVNK…PFDLEYKAKP (85 aa)) folds into the KH-like domain.

The protein belongs to the TRAFAC class TrmE-Era-EngA-EngB-Septin-like GTPase superfamily. EngA (Der) GTPase family. Associates with the 50S ribosomal subunit.

Its function is as follows. GTPase that plays an essential role in the late steps of ribosome biogenesis. In Chlamydia muridarum (strain MoPn / Nigg), this protein is GTPase Der.